Reading from the N-terminus, the 353-residue chain is Photosystem II D2 protein (353 aa).

The residue at position 2 (Thr2) is an N-acetylthreonine. Residue Thr2 is modified to Phosphothreonine. The helical transmembrane segment at 41–61 (CAYFALGGWFTGTTFVTSWYT) threads the bilayer. Position 118 (His118) interacts with chlorophyll a. A helical membrane pass occupies residues 125 to 141 (GFMLRQFELARSVQLRP). The pheophytin a site is built by Gln130 and Asn143. The helical transmembrane segment at 153-166 (VFVSVFLIYPLGQS) threads the bilayer. His198 is a chlorophyll a binding site. A helical transmembrane segment spans residues 208–228 (AALLCAIHGATVENTLFEDGD). The a plastoquinone site is built by His215 and Phe262. His215 is a binding site for Fe cation. Residue His269 coordinates Fe cation. A helical membrane pass occupies residues 279–295 (GLWMSALGVVGLALNLR).

Belongs to the reaction center PufL/M/PsbA/D family. In terms of assembly, PSII is composed of 1 copy each of membrane proteins PsbA, PsbB, PsbC, PsbD, PsbE, PsbF, PsbH, PsbI, PsbJ, PsbK, PsbL, PsbM, PsbT, PsbX, PsbY, PsbZ, Psb30/Ycf12, at least 3 peripheral proteins of the oxygen-evolving complex and a large number of cofactors. It forms dimeric complexes. The D1/D2 heterodimer binds P680, chlorophylls that are the primary electron donor of PSII, and subsequent electron acceptors. It shares a non-heme iron and each subunit binds pheophytin, quinone, additional chlorophylls, carotenoids and lipids. There is also a Cl(-1) ion associated with D1 and D2, which is required for oxygen evolution. The PSII complex binds additional chlorophylls, carotenoids and specific lipids. serves as cofactor.

It is found in the plastid. Its subcellular location is the chloroplast thylakoid membrane. The catalysed reaction is 2 a plastoquinone + 4 hnu + 2 H2O = 2 a plastoquinol + O2. Photosystem II (PSII) is a light-driven water:plastoquinone oxidoreductase that uses light energy to abstract electrons from H(2)O, generating O(2) and a proton gradient subsequently used for ATP formation. It consists of a core antenna complex that captures photons, and an electron transfer chain that converts photonic excitation into a charge separation. The D1/D2 (PsbA/PsbD) reaction center heterodimer binds P680, the primary electron donor of PSII as well as several subsequent electron acceptors. D2 is needed for assembly of a stable PSII complex. The polypeptide is Photosystem II D2 protein (Dioscorea elephantipes (Elephant's foot yam)).